A 379-amino-acid chain; its full sequence is Homoserine O-succinyltransferase (379 aa).

The AB hydrolase-1 domain occupies 51–360 (NAVLICHALS…DAPQGHDAFL (310 aa)). The active-site Nucleophile is the serine 157. Arginine 227 contacts substrate. Catalysis depends on residues aspartate 323 and histidine 356. Substrate is bound at residue aspartate 357.

This sequence belongs to the AB hydrolase superfamily. MetX family. As to quaternary structure, homodimer.

Its subcellular location is the cytoplasm. The enzyme catalyses L-homoserine + succinyl-CoA = O-succinyl-L-homoserine + CoA. It participates in amino-acid biosynthesis; L-methionine biosynthesis via de novo pathway; O-succinyl-L-homoserine from L-homoserine: step 1/1. Its function is as follows. Transfers a succinyl group from succinyl-CoA to L-homoserine, forming succinyl-L-homoserine. This chain is Homoserine O-succinyltransferase, found in Pseudomonas aeruginosa (strain UCBPP-PA14).